A 233-amino-acid chain; its full sequence is Lipoprotein-releasing system ATP-binding protein LolD (233 aa).

In terms of domain architecture, ABC transporter spans 6-233; the sequence is LQCDNLCKRY…TAELSLMGAE (228 aa). 42–49 serves as a coordination point for ATP; sequence GSSGSGKS.

This sequence belongs to the ABC transporter superfamily. Lipoprotein translocase (TC 3.A.1.125) family. The complex is composed of two ATP-binding proteins (LolD) and two transmembrane proteins (LolC and LolE).

Its subcellular location is the cell inner membrane. Its function is as follows. Part of the ABC transporter complex LolCDE involved in the translocation of mature outer membrane-directed lipoproteins, from the inner membrane to the periplasmic chaperone, LolA. Responsible for the formation of the LolA-lipoprotein complex in an ATP-dependent manner. This chain is Lipoprotein-releasing system ATP-binding protein LolD, found in Shigella dysenteriae serotype 1 (strain Sd197).